A 315-amino-acid polypeptide reads, in one-letter code: Neuroguidin (315 aa).

Ala2 is modified (N-acetylalanine). Residues 13–41 (SAVTLLKNLQEQVMAVTAQVKSLTQKVQA) adopt a coiled-coil conformation. The tract at residues 41–174 (AGAYPTEKGL…KGVSKKYVPP (134 aa)) is necessary for interaction with EIF4E. Residues Ser121, Ser142, and Ser143 each carry the phosphoserine modification. The disordered stretch occupies residues 124-169 (ENDPLRFKPHPSNMMSKLSSEDEEEDEAEDDQSEASGKKSVKGVSK). Residues 144 to 156 (EDEEEDEAEDDQS) are compositionally biased toward acidic residues. Residues 181 to 205 (YDETEAEREKKRLERAKRRALSSSV) are a coiled coil. Residues Ser204 and Ser214 each carry the phosphoserine modification. The tract at residues 277 to 315 (DISALTGGTVHLDEDQNPIKKRKKIPQKGRKKKGFRRRR) is disordered. Residues 295 to 315 (IKKRKKIPQKGRKKKGFRRRR) show a composition bias toward basic residues.

This sequence belongs to the SAS10 family. As to quaternary structure, part of the small subunit (SSU) processome, composed of more than 70 proteins and the RNA chaperone small nucleolar RNA (snoRNA) U3. Interacts with CPEB1 and EIF4E.

It is found in the nucleus. The protein localises to the nucleolus. Its subcellular location is the chromosome. It localises to the centromere. The protein resides in the cytoplasm. It is found in the cell projection. The protein localises to the axon. Its subcellular location is the dendrite. It localises to the filopodium. Part of the small subunit (SSU) processome, first precursor of the small eukaryotic ribosomal subunit. During the assembly of the SSU processome in the nucleolus, many ribosome biogenesis factors, an RNA chaperone and ribosomal proteins associate with the nascent pre-rRNA and work in concert to generate RNA folding, modifications, rearrangements and cleavage as well as targeted degradation of pre-ribosomal RNA by the RNA exosome. Its dissociation from the complex determines the transition from state pre-A1 to state pre-A1*. Inhibits mRNA translation in a cytoplasmic polyadenylation element (CPE)-dependent manner. The protein is Neuroguidin of Homo sapiens (Human).